Consider the following 124-residue polypeptide: Small ribosomal subunit protein bS6 (124 aa).

Belongs to the bacterial ribosomal protein bS6 family.

Binds together with bS18 to 16S ribosomal RNA. In Rippkaea orientalis (strain PCC 8801 / RF-1) (Cyanothece sp. (strain PCC 8801)), this protein is Small ribosomal subunit protein bS6.